Here is a 90-residue protein sequence, read N- to C-terminus: Small ribosomal subunit protein bS16 (90 aa).

It belongs to the bacterial ribosomal protein bS16 family.

This chain is Small ribosomal subunit protein bS16, found in Streptococcus pneumoniae (strain Hungary19A-6).